The following is a 297-amino-acid chain: Alpha-tubulin N-acetyltransferase 1 (297 aa).

The region spanning 1-184 (MDFPYDLNAL…NNFVVFAGFF (184 aa)) is the N-acetyltransferase domain. Acetyl-CoA-binding positions include 118-131 (FYVTETLQRHGYGS) and 154-163 (SPKFLSFLEK). The segment at 226 to 297 (FVRPGGPPHS…SLNRSRLSFH (72 aa)) is disordered. A compositionally biased stretch (pro residues) spans 230-240 (GGPPHSPPLLP). Residues 241–264 (SSPQSRSLSVGSSPSRAPLRPAAA) show a composition bias toward low complexity. Polar residues-rich tracts occupy residues 266–278 (VLQQGQTPSSPLN) and 286–297 (TSSLNRSRLSFH).

It belongs to the acetyltransferase ATAT1 family. In terms of assembly, monomer.

It localises to the cytoplasm. The protein localises to the membrane. Its subcellular location is the clathrin-coated pit. The protein resides in the cell junction. It is found in the focal adhesion. It localises to the cell projection. The protein localises to the axon. Its subcellular location is the cytoskeleton. The protein resides in the spindle. It carries out the reaction L-lysyl-[alpha-tubulin] + acetyl-CoA = N(6)-acetyl-L-lysyl-[alpha-tubulin] + CoA + H(+). Functionally, specifically acetylates 'Lys-40' in alpha-tubulin on the lumenal side of microtubules. Promotes microtubule destabilization and accelerates microtubule dynamics; this activity may be independent of acetylation activity. Acetylates alpha-tubulin with a slow enzymatic rate, due to a catalytic site that is not optimized for acetyl transfer. Enters the microtubule through each end and diffuses quickly throughout the lumen of microtubules. Acetylates only long/old microtubules because of its slow acetylation rate since it does not have time to act on dynamically unstable microtubules before the enzyme is released. May be involved in neuron development. Acetylates alpha-tubulin in neurons, but not in cilia. The chain is Alpha-tubulin N-acetyltransferase 1 from Danio rerio (Zebrafish).